Consider the following 145-residue polypeptide: D-aminoacyl-tRNA deacylase (145 aa).

A Gly-cisPro motif, important for rejection of L-amino acids motif is present at residues 137–138 (GP).

Belongs to the DTD family. Homodimer.

The protein resides in the cytoplasm. The enzyme catalyses glycyl-tRNA(Ala) + H2O = tRNA(Ala) + glycine + H(+). It catalyses the reaction a D-aminoacyl-tRNA + H2O = a tRNA + a D-alpha-amino acid + H(+). Functionally, an aminoacyl-tRNA editing enzyme that deacylates mischarged D-aminoacyl-tRNAs. Also deacylates mischarged glycyl-tRNA(Ala), protecting cells against glycine mischarging by AlaRS. Acts via tRNA-based rather than protein-based catalysis; rejects L-amino acids rather than detecting D-amino acids in the active site. By recycling D-aminoacyl-tRNA to D-amino acids and free tRNA molecules, this enzyme counteracts the toxicity associated with the formation of D-aminoacyl-tRNA entities in vivo and helps enforce protein L-homochirality. The sequence is that of D-aminoacyl-tRNA deacylase from Lactobacillus delbrueckii subsp. bulgaricus (strain ATCC BAA-365 / Lb-18).